The sequence spans 526 residues: Peptide chain release factor 3 (526 aa).

The tr-type G domain maps to 9–277 (DKRRTFAIIS…GIVEWAPKPL (269 aa)). GTP is bound by residues 18-25 (SHPDAGKT), 86-90 (DTPGH), and 140-143 (NKLD).

It belongs to the TRAFAC class translation factor GTPase superfamily. Classic translation factor GTPase family. PrfC subfamily.

The protein localises to the cytoplasm. In terms of biological role, increases the formation of ribosomal termination complexes and stimulates activities of RF-1 and RF-2. It binds guanine nucleotides and has strong preference for UGA stop codons. It may interact directly with the ribosome. The stimulation of RF-1 and RF-2 is significantly reduced by GTP and GDP, but not by GMP. The polypeptide is Peptide chain release factor 3 (Shewanella baltica (strain OS155 / ATCC BAA-1091)).